Reading from the N-terminus, the 293-residue chain is MFTGVATALATPFQENGQLNLEAWAALIEDQIKEGVTGLVIGGTTGEGMTITDDEFETLLVRAVEVANGRAVIIAGTGSNNTAVSIEKTKRAAELGAEMAMVVTPYYNKSTQAGLIAHFTAIADASPIPLMLYNVPSRTGVALAPETVGELAEHPRITALKEASGDISVMAQMMAHIPEGFTVYCGNDDQILPYMAWGAQGVVSVLSNVYPGATVALAEALLAGDLQTARTWQIRLLPVIDELFAEVNPIPVKAALQARGFEVGAPRLPLVPMSATAEAKLLSAMEQFNEVRQ.

A pyruvate-binding site is contributed by Thr-45. The active-site Proton donor/acceptor is Tyr-133. Residue Lys-161 is the Schiff-base intermediate with substrate of the active site. Val-203 provides a ligand contact to pyruvate.

Belongs to the DapA family. Homotetramer; dimer of dimers.

Its subcellular location is the cytoplasm. It carries out the reaction L-aspartate 4-semialdehyde + pyruvate = (2S,4S)-4-hydroxy-2,3,4,5-tetrahydrodipicolinate + H2O + H(+). It functions in the pathway amino-acid biosynthesis; L-lysine biosynthesis via DAP pathway; (S)-tetrahydrodipicolinate from L-aspartate: step 3/4. Catalyzes the condensation of (S)-aspartate-beta-semialdehyde [(S)-ASA] and pyruvate to 4-hydroxy-tetrahydrodipicolinate (HTPA). This chain is 4-hydroxy-tetrahydrodipicolinate synthase, found in Exiguobacterium sp. (strain ATCC BAA-1283 / AT1b).